A 185-amino-acid chain; its full sequence is Ribosome-recycling factor (185 aa).

This sequence belongs to the RRF family.

The protein localises to the cytoplasm. Responsible for the release of ribosomes from messenger RNA at the termination of protein biosynthesis. May increase the efficiency of translation by recycling ribosomes from one round of translation to another. In Nitrosomonas eutropha (strain DSM 101675 / C91 / Nm57), this protein is Ribosome-recycling factor.